A 91-amino-acid polypeptide reads, in one-letter code: Small ribosomal subunit protein uS19 (91 aa).

Belongs to the universal ribosomal protein uS19 family.

In terms of biological role, protein S19 forms a complex with S13 that binds strongly to the 16S ribosomal RNA. This is Small ribosomal subunit protein uS19 from Cupriavidus necator (strain ATCC 17699 / DSM 428 / KCTC 22496 / NCIMB 10442 / H16 / Stanier 337) (Ralstonia eutropha).